Reading from the N-terminus, the 493-residue chain is Argininosuccinate lyase (493 aa).

The protein belongs to the lyase 1 family. Argininosuccinate lyase subfamily.

It is found in the cytoplasm. It carries out the reaction 2-(N(omega)-L-arginino)succinate = fumarate + L-arginine. The protein operates within amino-acid biosynthesis; L-arginine biosynthesis; L-arginine from L-ornithine and carbamoyl phosphate: step 3/3. The polypeptide is Argininosuccinate lyase (Clavibacter sepedonicus (Clavibacter michiganensis subsp. sepedonicus)).